Reading from the N-terminus, the 88-residue chain is Small ribosomal subunit protein bS16c (88 aa).

It belongs to the bacterial ribosomal protein bS16 family.

The protein localises to the plastid. It localises to the chloroplast. The sequence is that of Small ribosomal subunit protein bS16c from Calycanthus floridus var. glaucus (Eastern sweetshrub).